Here is a 439-residue protein sequence, read N- to C-terminus: RNA polymerase II-associated protein RBA50 (439 aa).

Disordered stretches follow at residues 1–35 (MDLL…GFPE) and 49–79 (LREK…SEAK). The span at 15-30 (SVESNDNGTLSTNNCG) shows a compositional bias: polar residues.

It belongs to the RPAP1 family.

The protein resides in the cytoplasm. Functionally, forms an interface between the RNA polymerase II enzyme and chaperone/scaffolding proteins, suggesting that it is required to connect RNA polymerase II to regulators of protein complex formation. The chain is RNA polymerase II-associated protein RBA50 (RBA50) from Saccharomyces cerevisiae (strain ATCC 204508 / S288c) (Baker's yeast).